The sequence spans 226 residues: MLKNIPIPSPLSPVEGILIKRKTLERYFSIERLEQQAHQRAKRILREAEEEAKTLRMYAYQEGYEQGMIDALQQVAAYLTDNQTMAWKWMEKIQIYARELFSAAVDHPETLLTVLDEWLRDFDKPEGQLFLTLPVNAKKDHQKLMVLLMENWPGTFNLKYHQEQRFIMSCGDQIAEFSPEQFVETAVGVIKHHLDELPQDCRTISDNAINALIDEWKTKTQAEVIR.

In terms of assembly, the core secretion machinery of the T3SS is composed of approximately 20 different proteins, including cytoplasmic components, a base, an export apparatus and a needle. This subunit is part of the cytosolic complex. Interacts directly with InvC/SctN1 (T3SS-1 ATPase) and SpaO/SctQ (the major sorting platform component).

It localises to the cytoplasm. Functionally, component of the type III secretion system (T3SS), also called injectisome, which is used to inject bacterial effector proteins into eukaryotic host cells. Acts as a regulator of the InvC/SctN1 ATPase activity. Required for invasion and secretion. The protein is SPI-1 type 3 secretion system stator protein of Salmonella typhimurium (strain SL1344).